The chain runs to 412 residues: Inactive serine protease 35 (412 aa).

The signal sequence occupies residues 1–23; that stretch reads MGAMFFGLMLFTLGWTLIDGSES. Asparagine 110 carries an N-linked (GlcNAc...) asparagine glycan. The region spanning 124–407 is the Peptidase S1 domain; it reads VYGTDSRFSI…ICLWMHGDDA (284 aa). Cysteine 154 and cysteine 170 are joined by a disulfide. A compositionally biased stretch (basic residues) spans 192–207; that stretch reads RNKGGGKRRRGSRRNR. The tract at residues 192-246 is disordered; sequence RNKGGGKRRRGSRRNRREVSGAGREGSQDSLKETAKAGRRRKGSARRQRAADGRP. Basic and acidic residues predominate over residues 217–227; that stretch reads GSQDSLKETAK. Basic residues predominate over residues 228–239; sequence AGRRRKGSARRQ.

It belongs to the peptidase S1 family.

It is found in the secreted. In Bos taurus (Bovine), this protein is Inactive serine protease 35 (PRSS35).